Reading from the N-terminus, the 301-residue chain is Phosphatidylserine decarboxylase proenzyme (301 aa).

Active-site charge relay system; for autoendoproteolytic cleavage activity residues include Asp-117, His-173, and Ser-260. The active-site Schiff-base intermediate with substrate; via pyruvic acid; for decarboxylase activity is the Ser-260. Ser-260 is modified (pyruvic acid (Ser); by autocatalysis).

This sequence belongs to the phosphatidylserine decarboxylase family. PSD-B subfamily. Prokaryotic type II sub-subfamily. As to quaternary structure, heterodimer of a large membrane-associated beta subunit and a small pyruvoyl-containing alpha subunit. Requires pyruvate as cofactor. In terms of processing, is synthesized initially as an inactive proenzyme. Formation of the active enzyme involves a self-maturation process in which the active site pyruvoyl group is generated from an internal serine residue via an autocatalytic post-translational modification. Two non-identical subunits are generated from the proenzyme in this reaction, and the pyruvate is formed at the N-terminus of the alpha chain, which is derived from the carboxyl end of the proenzyme. The autoendoproteolytic cleavage occurs by a canonical serine protease mechanism, in which the side chain hydroxyl group of the serine supplies its oxygen atom to form the C-terminus of the beta chain, while the remainder of the serine residue undergoes an oxidative deamination to produce ammonia and the pyruvoyl prosthetic group on the alpha chain. During this reaction, the Ser that is part of the protease active site of the proenzyme becomes the pyruvoyl prosthetic group, which constitutes an essential element of the active site of the mature decarboxylase.

It is found in the cell membrane. It carries out the reaction a 1,2-diacyl-sn-glycero-3-phospho-L-serine + H(+) = a 1,2-diacyl-sn-glycero-3-phosphoethanolamine + CO2. It participates in phospholipid metabolism; phosphatidylethanolamine biosynthesis; phosphatidylethanolamine from CDP-diacylglycerol: step 2/2. Catalyzes the formation of phosphatidylethanolamine (PtdEtn) from phosphatidylserine (PtdSer). The sequence is that of Phosphatidylserine decarboxylase proenzyme from Chlamydia muridarum (strain MoPn / Nigg).